We begin with the raw amino-acid sequence, 156 residues long: Small ribosomal subunit protein uS7 (156 aa).

It belongs to the universal ribosomal protein uS7 family. As to quaternary structure, part of the 30S ribosomal subunit. Contacts proteins S9 and S11.

Its function is as follows. One of the primary rRNA binding proteins, it binds directly to 16S rRNA where it nucleates assembly of the head domain of the 30S subunit. Is located at the subunit interface close to the decoding center, probably blocks exit of the E-site tRNA. In Klebsiella pneumoniae subsp. pneumoniae (strain ATCC 700721 / MGH 78578), this protein is Small ribosomal subunit protein uS7.